Reading from the N-terminus, the 309-residue chain is tRNA dimethylallyltransferase (309 aa).

Residue 11-18 (GPTASGKS) coordinates ATP. 13–18 (TASGKS) is a substrate binding site. Interaction with substrate tRNA stretches follow at residues 36–39 (DSMQ) and 160–164 (QRLLR).

This sequence belongs to the IPP transferase family. In terms of assembly, monomer. Mg(2+) serves as cofactor.

The enzyme catalyses adenosine(37) in tRNA + dimethylallyl diphosphate = N(6)-dimethylallyladenosine(37) in tRNA + diphosphate. Functionally, catalyzes the transfer of a dimethylallyl group onto the adenine at position 37 in tRNAs that read codons beginning with uridine, leading to the formation of N6-(dimethylallyl)adenosine (i(6)A). The sequence is that of tRNA dimethylallyltransferase from Caulobacter sp. (strain K31).